A 239-amino-acid chain; its full sequence is Lactate utilization protein A (239 aa).

The protein belongs to the LutA/YkgE family.

In terms of biological role, is involved in L-lactate degradation and allows cells to grow with lactate as the sole carbon source. The polypeptide is Lactate utilization protein A (Bacillus cytotoxicus (strain DSM 22905 / CIP 110041 / 391-98 / NVH 391-98)).